A 357-amino-acid chain; its full sequence is Glucose-6-phosphatase catalytic subunit 1 (357 aa).

Residues 1–28 are Lumenal-facing; it reads MEKGMNVLHDFGIQSTHYLQVNYQDSQD. A helical transmembrane segment spans residues 29 to 49; it reads WFILVSVIADLRNAFYVLFPI. At 50-60 the chain is on the cytoplasmic side; that stretch reads WFHLREAVGIK. Residues 61–81 form a helical membrane-spanning segment; it reads LLWVAVIGDWLNLVFKWILFG. Residues 82–117 lie on the Lumenal side of the membrane; sequence QRPYWWVMDTDYYSNASVPLIKQFPVTCETGPGSPS. Residue Arg-83 coordinates substrate. An N-linked (GlcNAc...) asparagine glycan is attached at Asn-96. A helical transmembrane segment spans residues 118 to 138; it reads GHAMGTAGVYYVMVTSTLSMF. His-119 serves as the catalytic Proton donor. Over 139–147 the chain is Cytoplasmic; the sequence is RGKKKPTYR. The chain crosses the membrane as a helical span at residues 148 to 168; the sequence is FRCLNVILWLGFWAVQLNVCL. Over 169–170 the chain is Lumenal; that stretch reads SR. Arg-170 contributes to the substrate binding site. Residues 171–191 traverse the membrane as a helical segment; the sequence is IYLAAHFPHQVVAGVLSGIAV. His-176 functions as the Nucleophile in the catalytic mechanism. Topologically, residues 192-209 are cytoplasmic; that stretch reads AETFRHIQSIYNASLKKY. The chain crosses the membrane as a helical span at residues 210 to 230; that stretch reads FFITFFLLSFAIGFYLLLKGL. The Lumenal portion of the chain corresponds to 231–254; that stretch reads GVDLLWTLEKARRWCERPEWVHID. The chain crosses the membrane as a helical span at residues 255–275; sequence TTPFASLLKNVGTLFGLGLAL. Residues 276–291 lie on the Cytoplasmic side of the membrane; sequence NSSMYRESCKGTLSKW. A helical transmembrane segment spans residues 292–312; sequence FPFRLSCIVVSLILLHLFDSL. At 313–320 the chain is on the lumenal side; that stretch reads KPPSQIEL. Residues 321–341 traverse the membrane as a helical segment; the sequence is IFYVLSFCKSAAVPLASVSLI. The Cytoplasmic portion of the chain corresponds to 342–357; the sequence is PYCLARVLGQPDKKSL. The short motif at 354–357 is the Prevents secretion from ER element; the sequence is KKSL.

The protein belongs to the glucose-6-phosphatase family.

Its subcellular location is the endoplasmic reticulum membrane. It catalyses the reaction D-glucose 6-phosphate + H2O = D-glucose + phosphate. It participates in carbohydrate biosynthesis; gluconeogenesis. Hydrolyzes glucose-6-phosphate to glucose in the endoplasmic reticulum. Forms with the glucose-6-phosphate transporter (SLC37A4/G6PT) the complex responsible for glucose production in the terminal step of glycogenolysis and gluconeogenesis. Hence, it is the key enzyme in homeostatic regulation of blood glucose levels. The polypeptide is Glucose-6-phosphatase catalytic subunit 1 (G6PC1) (Felis catus (Cat)).